We begin with the raw amino-acid sequence, 204 residues long: Leucyl/phenylalanyl-tRNA--protein transferase (204 aa).

This sequence belongs to the L/F-transferase family.

The protein localises to the cytoplasm. It catalyses the reaction N-terminal L-lysyl-[protein] + L-leucyl-tRNA(Leu) = N-terminal L-leucyl-L-lysyl-[protein] + tRNA(Leu) + H(+). The enzyme catalyses N-terminal L-arginyl-[protein] + L-leucyl-tRNA(Leu) = N-terminal L-leucyl-L-arginyl-[protein] + tRNA(Leu) + H(+). It carries out the reaction L-phenylalanyl-tRNA(Phe) + an N-terminal L-alpha-aminoacyl-[protein] = an N-terminal L-phenylalanyl-L-alpha-aminoacyl-[protein] + tRNA(Phe). In terms of biological role, functions in the N-end rule pathway of protein degradation where it conjugates Leu, Phe and, less efficiently, Met from aminoacyl-tRNAs to the N-termini of proteins containing an N-terminal arginine or lysine. This is Leucyl/phenylalanyl-tRNA--protein transferase from Brucella melitensis biotype 2 (strain ATCC 23457).